We begin with the raw amino-acid sequence, 495 residues long: Cobyric acid synthase (495 aa).

A GATase cobBQ-type domain is found at 256–444 (KVNVAVVLLR…VHGILDNPSV (189 aa)). Cys-337 (nucleophile) is an active-site residue. His-436 is an active-site residue.

The protein belongs to the CobB/CobQ family. CobQ subfamily.

It functions in the pathway cofactor biosynthesis; adenosylcobalamin biosynthesis. Catalyzes amidations at positions B, D, E, and G on adenosylcobyrinic A,C-diamide. NH(2) groups are provided by glutamine, and one molecule of ATP is hydrogenolyzed for each amidation. This Bacteroides fragilis (strain ATCC 25285 / DSM 2151 / CCUG 4856 / JCM 11019 / LMG 10263 / NCTC 9343 / Onslow / VPI 2553 / EN-2) protein is Cobyric acid synthase.